Reading from the N-terminus, the 423-residue chain is Probable M18 family aminopeptidase 2 (423 aa).

Residues His84, His157, and His397 each contribute to the Zn(2+) site.

The protein belongs to the peptidase M18 family. The cofactor is Zn(2+).

This chain is Probable M18 family aminopeptidase 2 (apeB), found in Borreliella burgdorferi (strain ATCC 35210 / DSM 4680 / CIP 102532 / B31) (Borrelia burgdorferi).